Here is a 575-residue protein sequence, read N- to C-terminus: 2-succinyl-5-enolpyruvyl-6-hydroxy-3-cyclohexene-1-carboxylate synthase (575 aa).

The protein belongs to the TPP enzyme family. MenD subfamily. As to quaternary structure, homodimer. Requires Mg(2+) as cofactor. Mn(2+) is required as a cofactor. Thiamine diphosphate serves as cofactor.

The catalysed reaction is isochorismate + 2-oxoglutarate + H(+) = 5-enolpyruvoyl-6-hydroxy-2-succinyl-cyclohex-3-ene-1-carboxylate + CO2. It participates in quinol/quinone metabolism; 1,4-dihydroxy-2-naphthoate biosynthesis; 1,4-dihydroxy-2-naphthoate from chorismate: step 2/7. The protein operates within quinol/quinone metabolism; menaquinone biosynthesis. Catalyzes the thiamine diphosphate-dependent decarboxylation of 2-oxoglutarate and the subsequent addition of the resulting succinic semialdehyde-thiamine pyrophosphate anion to isochorismate to yield 2-succinyl-5-enolpyruvyl-6-hydroxy-3-cyclohexene-1-carboxylate (SEPHCHC). In Syntrophus aciditrophicus (strain SB), this protein is 2-succinyl-5-enolpyruvyl-6-hydroxy-3-cyclohexene-1-carboxylate synthase.